A 190-amino-acid polypeptide reads, in one-letter code: Double zinc ribbon protein MJ0416 (190 aa).

Residues 134–183 form a DZANK-type zinc finger; sequence CPNCNNYISDSWKYCAHCGAKLKEEEEEVLRCPNCKRPVQPEWIVCPYCG.

The sequence is that of Double zinc ribbon protein MJ0416 from Methanocaldococcus jannaschii (strain ATCC 43067 / DSM 2661 / JAL-1 / JCM 10045 / NBRC 100440) (Methanococcus jannaschii).